We begin with the raw amino-acid sequence, 393 residues long: Dihydrolipoyllysine-residue succinyltransferase component of 2-oxoglutarate dehydrogenase complex (393 aa).

Positions 3 to 78 (RINILVPDLP…KSNQILGNIV (76 aa)) constitute a Lipoyl-binding domain. Lysine 44 carries the N6-lipoyllysine modification. Residues histidine 364 and aspartate 368 contribute to the active site.

It belongs to the 2-oxoacid dehydrogenase family. As to quaternary structure, forms a 24-polypeptide structural core with octahedral symmetry. Part of the 2-oxoglutarate dehydrogenase (OGDH) complex composed of E1 (2-oxoglutarate dehydrogenase), E2 (dihydrolipoamide succinyltransferase) and E3 (dihydrolipoamide dehydrogenase); the complex contains multiple copies of the three enzymatic components (E1, E2 and E3). It depends on (R)-lipoate as a cofactor.

The catalysed reaction is N(6)-[(R)-dihydrolipoyl]-L-lysyl-[protein] + succinyl-CoA = N(6)-[(R)-S(8)-succinyldihydrolipoyl]-L-lysyl-[protein] + CoA. It participates in amino-acid degradation; L-lysine degradation via saccharopine pathway; glutaryl-CoA from L-lysine: step 6/6. Functionally, E2 component of the 2-oxoglutarate dehydrogenase (OGDH) complex which catalyzes the second step in the conversion of 2-oxoglutarate to succinyl-CoA and CO(2). In Buchnera aphidicola subsp. Schizaphis graminum (strain Sg), this protein is Dihydrolipoyllysine-residue succinyltransferase component of 2-oxoglutarate dehydrogenase complex (sucB).